The chain runs to 188 residues: V-type ATP synthase subunit E (188 aa).

The protein belongs to the V-ATPase E subunit family.

Functionally, produces ATP from ADP in the presence of a proton gradient across the membrane. This chain is V-type ATP synthase subunit E (atpE), found in Thermus thermophilus (strain ATCC 27634 / DSM 579 / HB8).